We begin with the raw amino-acid sequence, 901 residues long: ABC transporter A family member 8 (901 aa).

Helical transmembrane passes span 34 to 54 (LITI…LFDT), 315 to 335 (IASL…FPVI), 369 to 389 (FLLI…LIGL), 402 to 422 (VFFF…SAMF), 427 to 447 (TATV…IFLF), 460 to 477 (WIIA…RGLY), and 508 to 528 (CIML…DQII). The 238-residue stretch at 586 to 823 (VLCNNLKKVY…YGGSYVLTVT (238 aa)) folds into the ABC transporter domain. ATP is bound at residue 624–631 (GPNGAGKT).

The protein belongs to the ABC transporter superfamily. ABCA family. CPR flippase (TC 3.A.1.211) subfamily.

The protein localises to the membrane. This chain is ABC transporter A family member 8 (ABCA8), found in Arabidopsis thaliana (Mouse-ear cress).